Reading from the N-terminus, the 392-residue chain is DNA-directed RNA polymerase subunit Rpo1C (392 aa).

It belongs to the RNA polymerase beta' chain family. In terms of assembly, part of the 13-subunit RNA polymerase complex.

The protein resides in the cytoplasm. It carries out the reaction RNA(n) + a ribonucleoside 5'-triphosphate = RNA(n+1) + diphosphate. Functionally, DNA-dependent RNA polymerase (RNAP) catalyzes the transcription of DNA into RNA using the four ribonucleoside triphosphates as substrates. Forms part of the jaw domain. This chain is DNA-directed RNA polymerase subunit Rpo1C, found in Saccharolobus solfataricus (strain ATCC 35092 / DSM 1617 / JCM 11322 / P2) (Sulfolobus solfataricus).